We begin with the raw amino-acid sequence, 205 residues long: Small ribosomal subunit protein uS2 (205 aa).

The protein belongs to the universal ribosomal protein uS2 family.

The protein is Small ribosomal subunit protein uS2 (rps2) of Aeropyrum pernix (strain ATCC 700893 / DSM 11879 / JCM 9820 / NBRC 100138 / K1).